Reading from the N-terminus, the 301-residue chain is Probable alpha-L-glutamate ligase (301 aa).

The ATP-grasp domain occupies 104-287; the sequence is LQLLSRKGIG…VAGLIYEFIE (184 aa). Residues Lys-141, 178–179, Asp-187, and 211–213 contribute to the ATP site; these read EF and RSN. Mg(2+)-binding residues include Asp-248, Glu-260, and Asn-262. Residues Asp-248, Glu-260, and Asn-262 each contribute to the Mn(2+) site.

This sequence belongs to the RimK family. It depends on Mg(2+) as a cofactor. Requires Mn(2+) as cofactor.

The sequence is that of Probable alpha-L-glutamate ligase from Shewanella loihica (strain ATCC BAA-1088 / PV-4).